A 219-amino-acid chain; its full sequence is Ribose-5-phosphate isomerase A (219 aa).

Residues 28-31 (SGST), 81-84 (DGAD), and 94-97 (KGGG) contribute to the substrate site. E103 functions as the Proton acceptor in the catalytic mechanism. K121 provides a ligand contact to substrate.

This sequence belongs to the ribose 5-phosphate isomerase family. In terms of assembly, homodimer.

It carries out the reaction aldehydo-D-ribose 5-phosphate = D-ribulose 5-phosphate. Its pathway is carbohydrate degradation; pentose phosphate pathway; D-ribose 5-phosphate from D-ribulose 5-phosphate (non-oxidative stage): step 1/1. Functionally, catalyzes the reversible conversion of ribose-5-phosphate to ribulose 5-phosphate. This chain is Ribose-5-phosphate isomerase A, found in Histophilus somni (strain 129Pt) (Haemophilus somnus).